Here is a 342-residue protein sequence, read N- to C-terminus: Ribosomal RNA small subunit methyltransferase C (342 aa).

This sequence belongs to the methyltransferase superfamily. RsmC family. In terms of assembly, monomer.

It is found in the cytoplasm. The enzyme catalyses guanosine(1207) in 16S rRNA + S-adenosyl-L-methionine = N(2)-methylguanosine(1207) in 16S rRNA + S-adenosyl-L-homocysteine + H(+). In terms of biological role, specifically methylates the guanine in position 1207 of 16S rRNA in the 30S particle. This chain is Ribosomal RNA small subunit methyltransferase C, found in Shewanella sp. (strain MR-7).